The primary structure comprises 548 residues: Alpha-humulene synthase (548 aa).

The Mg(2+) site is built by aspartate 302, aspartate 306, and glutamate 453. The short motif at 302-306 (DDIYD) is the DDXXD motif element.

The protein belongs to the terpene synthase family. In terms of tissue distribution, mostly expressed in rhizomes.

The catalysed reaction is (2E,6E)-farnesyl diphosphate = alpha-humulene + diphosphate. Catalyzes the formation of alpha-humulene in the first step of zerumbone biosynthesis, a highly promising multi-anticancer agent. Also mediates formation of beta-caryophyllene at a much lower level. The polypeptide is Alpha-humulene synthase (ZSS1) (Zingiber zerumbet (Shampoo ginger)).